Here is a 173-residue protein sequence, read N- to C-terminus: Small ribosomal subunit protein uS10m (173 aa).

It belongs to the universal ribosomal protein uS10 family. Component of the mitochondrial ribosome small subunit (28S) which comprises a 12S rRNA and about 30 distinct proteins.

It localises to the mitochondrion. The protein is Small ribosomal subunit protein uS10m (mRpS10) of Drosophila melanogaster (Fruit fly).